A 186-amino-acid chain; its full sequence is Threonylcarbamoyl-AMP synthase (186 aa).

Positions 3 to 186 constitute a YrdC-like domain; sequence ELTLDSAVAT…DALSGNVLRS (184 aa).

This sequence belongs to the SUA5 family. TsaC subfamily.

The protein localises to the cytoplasm. It carries out the reaction L-threonine + hydrogencarbonate + ATP = L-threonylcarbamoyladenylate + diphosphate + H2O. Its function is as follows. Required for the formation of a threonylcarbamoyl group on adenosine at position 37 (t(6)A37) in tRNAs that read codons beginning with adenine. Catalyzes the conversion of L-threonine, HCO(3)(-)/CO(2) and ATP to give threonylcarbamoyl-AMP (TC-AMP) as the acyladenylate intermediate, with the release of diphosphate. The protein is Threonylcarbamoyl-AMP synthase of Stenotrophomonas maltophilia (strain K279a).